The primary structure comprises 724 residues: Probable metal-nicotianamine transporter YSL8 (724 aa).

The tract at residues methionine 1 to glycine 58 is disordered. The segment covering proline 8–glutamine 20 has biased composition (basic and acidic residues). Residue serine 25 is modified to Phosphoserine. A compositionally biased stretch (acidic residues) spans glutamate 43–valine 56. 7 consecutive transmembrane segments (helical) span residues leucine 72–methionine 92, leucine 96–valine 116, cysteine 144–methionine 164, leucine 184–proline 204, valine 245–alanine 265, isoleucine 304–isoleucine 324, and valine 349–isoleucine 369. Residues arginine 386–isoleucine 407 are disordered. 8 helical membrane passes run isoleucine 423 to leucine 443, isoleucine 455 to leucine 475, tryptophan 478 to glycine 497, glycine 501 to alanine 520, phenylalanine 541 to leucine 561, leucine 603 to leucine 623, phenylalanine 641 to tryptophan 661, and glycine 679 to valine 699.

It belongs to the YSL (TC 2.A.67.2) family.

The protein resides in the membrane. May be involved in the transport of nicotianamine-chelated metals. In Arabidopsis thaliana (Mouse-ear cress), this protein is Probable metal-nicotianamine transporter YSL8 (YSL8).